Consider the following 698-residue polypeptide: Polyphosphate kinase (698 aa).

Position 63 (Asn63) interacts with ATP. Mg(2+) contacts are provided by Arg390 and Arg420. The Phosphohistidine intermediate role is filled by His450. 3 residues coordinate ATP: Tyr483, Arg579, and His607.

This sequence belongs to the polyphosphate kinase 1 (PPK1) family. Requires Mg(2+) as cofactor. Post-translationally, an intermediate of this reaction is the autophosphorylated ppk in which a phosphate is covalently linked to a histidine residue through a N-P bond.

It catalyses the reaction [phosphate](n) + ATP = [phosphate](n+1) + ADP. Its function is as follows. Catalyzes the reversible transfer of the terminal phosphate of ATP to form a long-chain polyphosphate (polyP). The protein is Polyphosphate kinase of Xylella fastidiosa (strain Temecula1 / ATCC 700964).